A 402-amino-acid chain; its full sequence is MSSRVHKVVLAYSGGLDTSIIVPWLKQNYGNPEVICYCANIGQDDELSGLEAKAIATGASKCYVEDLREEFVRDFLFPLLQSGAVYERTYLLGTSVARPLIARRQAEIALQEGADALAHGCTGKGNDQVRFELTYMAFAPHLKVIAPWREWNIRSREDALDYAAEHNVPVTATLKSIYSRDRNIWHMSHEGGILEDPWQEPEEAMYTLTTAPEAAPDEPEYVTVGFDQGVPVSVNGERLGPVDLLLALNNIGAKHGIGRVDLVENRLVGMKSHGVYETPGGTILRVAHQGLEQLALDRDTLHYKDVIAHRYAELVYYGQWYTPLREALDAFVRVTQRNVTGEARLKLYKGNAMLVGRRAAKSLYNPDIASFTMSDSYNQKDAEGFIKIFGLPVKVQALLEGR.

ATP is bound by residues 11-19 (AYSGGLDTS) and Ala39. L-citrulline is bound by residues Tyr90 and Ser95. Residue Gly120 participates in ATP binding. Residues Thr122, Asn126, and Asp127 each coordinate L-aspartate. Asn126 serves as a coordination point for L-citrulline. Positions 130, 179, 188, 264, and 276 each coordinate L-citrulline.

The protein belongs to the argininosuccinate synthase family. Type 1 subfamily. As to quaternary structure, homotetramer.

It is found in the cytoplasm. The catalysed reaction is L-citrulline + L-aspartate + ATP = 2-(N(omega)-L-arginino)succinate + AMP + diphosphate + H(+). Its pathway is amino-acid biosynthesis; L-arginine biosynthesis; L-arginine from L-ornithine and carbamoyl phosphate: step 2/3. The sequence is that of Argininosuccinate synthase from Roseiflexus castenholzii (strain DSM 13941 / HLO8).